The primary structure comprises 608 residues: Phosphoenolpyruvate carboxykinase [GTP] (608 aa).

Residues Arg-82 and 222–224 (YGG) each bind substrate. Mn(2+) is bound by residues Lys-231 and His-251. Position 273 (Ser-273) interacts with substrate. 274–279 (ACGKTN) provides a ligand contact to GTP. The active site involves Cys-275. Asp-298 is a binding site for Mn(2+). Position 389-391 (389-391 (NSR)) interacts with substrate. Residues Arg-391, Arg-422, and 517-520 (FGDN) each bind GTP.

The protein belongs to the phosphoenolpyruvate carboxykinase [GTP] family. Monomer. Mn(2+) serves as cofactor.

It is found in the cytoplasm. It catalyses the reaction oxaloacetate + GTP = phosphoenolpyruvate + GDP + CO2. The protein operates within carbohydrate biosynthesis; gluconeogenesis. Functionally, catalyzes the conversion of oxaloacetate (OAA) to phosphoenolpyruvate (PEP), the rate-limiting step in the metabolic pathway that produces glucose from lactate and other precursors derived from the citric acid cycle. This Paenarthrobacter aurescens (strain TC1) protein is Phosphoenolpyruvate carboxykinase [GTP].